Reading from the N-terminus, the 282-residue chain is tRNA N(3)-cytidine methyltransferase METTL6 (282 aa).

S-adenosyl-L-methionine is bound by residues Trp-45, Tyr-49, Gly-87, Asp-110, Asp-136, Leu-137, and Ile-157.

The protein belongs to the methyltransferase superfamily. METL family. In terms of assembly, monomer. Interacts with SARS1/SerRS; interaction is mediated via tRNA(Ser) and is required for N(3)-methylcytidine methylation.

The protein resides in the cytoplasm. Its subcellular location is the nucleus. It carries out the reaction cytidine(32) in tRNA(Ser) + S-adenosyl-L-methionine = N(3)-methylcytidine(32) in tRNA(Ser) + S-adenosyl-L-homocysteine + H(+). S-adenosyl-L-methionine-dependent methyltransferase that mediates N(3)-methylcytidine modification of residue 32 of the tRNA anticodon loop of tRNA(Ser), including tRNA(Ser)(UGA) and tRNA(Ser)(GCU). Interaction with SARS1/SerRS is required for N(3)-methylcytidine methylation. The polypeptide is tRNA N(3)-cytidine methyltransferase METTL6 (Mus musculus (Mouse)).